The primary structure comprises 525 residues: GMP synthase [glutamine-hydrolyzing] (525 aa).

Residues 9–207 (RILILDFGSQ…VLQICQCEPL (199 aa)) enclose the Glutamine amidotransferase type-1 domain. The active-site Nucleophile is Cys-86. Residues His-181 and Glu-183 contribute to the active site. The GMPS ATP-PPase domain occupies 208 to 400 (WTPRNIIDQT…LGLPNAMLHR (193 aa)). ATP is bound at residue 235–241 (SGGVDSA).

In terms of assembly, homodimer.

It carries out the reaction XMP + L-glutamine + ATP + H2O = GMP + L-glutamate + AMP + diphosphate + 2 H(+). It functions in the pathway purine metabolism; GMP biosynthesis; GMP from XMP (L-Gln route): step 1/1. Its function is as follows. Catalyzes the synthesis of GMP from XMP. The protein is GMP synthase [glutamine-hydrolyzing] of Hamiltonella defensa subsp. Acyrthosiphon pisum (strain 5AT).